A 342-amino-acid chain; its full sequence is Flagellar P-ring protein (342 aa).

The signal sequence occupies residues 1–19 (MKRVFLWLIFVLAFHKLLA).

It belongs to the FlgI family. As to quaternary structure, the basal body constitutes a major portion of the flagellar organelle and consists of four rings (L,P,S, and M) mounted on a central rod.

It localises to the periplasm. The protein resides in the bacterial flagellum basal body. In terms of biological role, assembles around the rod to form the L-ring and probably protects the motor/basal body from shearing forces during rotation. The chain is Flagellar P-ring protein from Helicobacter pylori (strain G27).